Here is a 433-residue protein sequence, read N- to C-terminus: O-methyltransferase VdtC (433 aa).

Asp-284 contributes to the S-adenosyl-L-methionine binding site. The active-site Proton acceptor is His-335.

The protein belongs to the class I-like SAM-binding methyltransferase superfamily. Cation-independent O-methyltransferase family. COMT subfamily.

It carries out the reaction 7,9,10-trihydroxy-3-(2-oxopropyl)-1H-benzo[g]isochromen-1-one + S-adenosyl-L-methionine = 9,10-dihydroxy-7-methoxy-3-(2-oxopropyl)-1H-benzo[g]isochromen-1-one + S-adenosyl-L-homocysteine + H(+). Its pathway is secondary metabolite biosynthesis. In terms of biological role, O-methyltransferase; part of the gene cluster that mediates the biosynthesis of viriditoxin, one of the 'classical' secondary metabolites produced by fungi and that has antibacterial activity. The first step is performed by the polyketide synthase VdtA which condenses one acetyl-CoA and 6 malonyl-CoA units to form the heptaketide monomer backbone of viriditoxin. The product of VdtA is then O-methylated on C7 by the O-methyltransferase VdtC. The O-methyl group is important for the stereoselective coupling of the monomers at the final step of viriditoxin biosynthesis. The short-chain dehydrogenase/reductase VdtF then acts as a stereospecific reductase converting the pyrone to dihydropyrone via the reduction of the C3-C4 double bond. The FAD-binding monooxygenase VdtE then converts the ketone group into a methyl-ester group to yield semi-viriditoxin. Finally, the laccase VdtB is involved in dimerization of 2 semi-viriditoxin molecules to yield the final viriditoxin. VdtB is responsible for the regioselective 6,6'-coupling of semi-viriditoxin, which yields (M)-viriditoxin and (P)-viriditoxin at a ratio of 1:2. The non-catalytic carboxylesterase-like protein VdtD affects the stereochemistical outcome of the coupling. The highly reducing polyketide synthase VdtX is not involved in viriditoxin synthesis, but might possibly play a role in the production of additional metabolites not identified yet. The sequence is that of O-methyltransferase VdtC from Byssochlamys spectabilis (Paecilomyces variotii).